The primary structure comprises 301 residues: Light-independent protochlorophyllide reductase iron-sulfur ATP-binding protein (301 aa).

Residues 1-13 show a composition bias toward low complexity; the sequence is MNVTLRPPLAAAP. Positions 1 to 22 are disordered; that stretch reads MNVTLRPPLAAAPRRPDGAGSV. ATP-binding positions include 45-50 and K74; that span reads GIGKST. A Mg(2+)-binding site is contributed by S49. Positions 130 and 164 each coordinate [4Fe-4S] cluster. ATP contacts are provided by residues 215-216 and 239-241; these read NR and PDL.

The protein belongs to the NifH/BchL/ChlL family. In terms of assembly, homodimer. Protochlorophyllide reductase is composed of three subunits; BchL, BchN and BchB. Requires [4Fe-4S] cluster as cofactor.

It carries out the reaction chlorophyllide a + oxidized 2[4Fe-4S]-[ferredoxin] + 2 ADP + 2 phosphate = protochlorophyllide a + reduced 2[4Fe-4S]-[ferredoxin] + 2 ATP + 2 H2O. Its pathway is porphyrin-containing compound metabolism; bacteriochlorophyll biosynthesis (light-independent). Its function is as follows. Component of the dark-operative protochlorophyllide reductase (DPOR) that uses Mg-ATP and reduced ferredoxin to reduce ring D of protochlorophyllide (Pchlide) to form chlorophyllide a (Chlide). This reaction is light-independent. The L component serves as a unique electron donor to the NB-component of the complex, and binds Mg-ATP. The sequence is that of Light-independent protochlorophyllide reductase iron-sulfur ATP-binding protein from Bradyrhizobium sp. (strain ORS 278).